Consider the following 498-residue polypeptide: DNA primase (498 aa).

Residues 35 to 59 (CPFHPDDTPSFYVSPSKQIFKCFGC) form a CHC2-type zinc finger. Residues 243–324 (GFAILVEGYF…EVYPVYLPEG (82 aa)) enclose the Toprim domain. Mg(2+) is bound by residues glutamate 249, aspartate 293, and aspartate 295.

This sequence belongs to the DnaG primase family. As to quaternary structure, monomer. Interacts with DnaB. Zn(2+) serves as cofactor. Requires Mg(2+) as cofactor.

It carries out the reaction ssDNA + n NTP = ssDNA/pppN(pN)n-1 hybrid + (n-1) diphosphate.. Functionally, RNA polymerase that catalyzes the synthesis of short RNA molecules used as primers for DNA polymerase during DNA replication. The chain is DNA primase from Aquifex aeolicus (strain VF5).